The primary structure comprises 496 residues: L-arabinose isomerase (496 aa).

Mn(2+)-binding residues include glutamate 302, glutamate 329, histidine 346, and histidine 445.

This sequence belongs to the arabinose isomerase family. Requires Mn(2+) as cofactor.

The catalysed reaction is beta-L-arabinopyranose = L-ribulose. It participates in carbohydrate degradation; L-arabinose degradation via L-ribulose; D-xylulose 5-phosphate from L-arabinose (bacterial route): step 1/3. Functionally, catalyzes the conversion of L-arabinose to L-ribulose. The polypeptide is L-arabinose isomerase (Thermotoga petrophila (strain ATCC BAA-488 / DSM 13995 / JCM 10881 / RKU-1)).